The primary structure comprises 244 residues: MRIIVVDNYEKMSKKAAAMIASQVILKPDSVLGLATGDTPIGMYKEIIDIYKNEKMDFSKVRTFNLDEYYGLNRENPQSYYYYMMNNLFNHVNIDENNINIPNGMADNIEIECKEYERKIDKAGGIDLQILGIGVNGHIGFNEPNISFESETHLVNLNEKTIESNSRFFSSKEEVPTKAISMGIKSIIHSKKIILLACGSAKSDAVSKAINGKINPNIPASILQLHRDVVVIIDKEAASKLNLK.

The active-site Proton acceptor; for enolization step is the Asp67. The active-site For ring-opening step is Asn136. His138 (proton acceptor; for ring-opening step) is an active-site residue. The active-site For ring-opening step is the Glu143.

It belongs to the glucosamine/galactosamine-6-phosphate isomerase family. NagB subfamily.

The enzyme catalyses alpha-D-glucosamine 6-phosphate + H2O = beta-D-fructose 6-phosphate + NH4(+). It functions in the pathway amino-sugar metabolism; N-acetylneuraminate degradation; D-fructose 6-phosphate from N-acetylneuraminate: step 5/5. Its function is as follows. Catalyzes the reversible isomerization-deamination of glucosamine 6-phosphate (GlcN6P) to form fructose 6-phosphate (Fru6P) and ammonium ion. In Clostridium botulinum (strain Loch Maree / Type A3), this protein is Glucosamine-6-phosphate deaminase.